The chain runs to 212 residues: Large ribosomal subunit protein bL25 (212 aa).

The disordered stretch occupies residues 183–212 (HDLPVASIHKPKGAKADDAEGEEGEEGGEE). Residues 201–212 (AEGEEGEEGGEE) show a composition bias toward acidic residues.

This sequence belongs to the bacterial ribosomal protein bL25 family. CTC subfamily. Part of the 50S ribosomal subunit; part of the 5S rRNA/L5/L18/L25 subcomplex. Contacts the 5S rRNA. Binds to the 5S rRNA independently of L5 and L18.

This is one of the proteins that binds to the 5S RNA in the ribosome where it forms part of the central protuberance. In Marinobacter nauticus (strain ATCC 700491 / DSM 11845 / VT8) (Marinobacter aquaeolei), this protein is Large ribosomal subunit protein bL25.